Reading from the N-terminus, the 476-residue chain is Aspartate kinase Ask_Ect (476 aa).

In terms of domain architecture, ACT spans 405–476; that stretch reads SAIGSDLKVK…ENHGDVIAAA (72 aa).

It belongs to the aspartokinase family. Monomer.

The protein resides in the cytoplasm. It carries out the reaction L-aspartate + ATP = 4-phospho-L-aspartate + ADP. The protein operates within amine and polyamine biosynthesis; ectoine biosynthesis. With respect to regulation, allosterically and strongly feedback inhibited by tryptophan. The presence of either 650 mM NaCl or KCl reduces the inhibition by tryptophan. In terms of biological role, involved in the biosynthesis of L-aspartate-beta-semialdehyde, which is an intermediate in the biosynthesis of ectoine, a highly soluble organic osmolyte, called compatible solute. Ectoine is used to avoid excessive water efflux, plasmolysis, molecular crowding of the cytoplasm, and cessation of growth in high salinity environments. Catalyzes the phosphorylation of the beta-carboxyl group of L-aspartate to yield 4-phospho-L-aspartate. This chain is Aspartate kinase Ask_Ect (ask), found in Stutzerimonas stutzeri (strain A1501) (Pseudomonas stutzeri).